Consider the following 33-residue polypeptide: Mu/delta-theraphotoxin-Pm2a (33 aa).

3 cysteine pairs are disulfide-bonded: cysteine 2-cysteine 16, cysteine 9-cysteine 21, and cysteine 15-cysteine 27. Phenylalanine 33 is modified (phenylalanine amide).

In terms of tissue distribution, expressed by the venom gland.

It localises to the secreted. Its function is as follows. Gating-modifier toxin with very weak activity on Nav1.7/SCN9A and Nav1.8/SCN10A. Shows 22% peak current inhibition (at 10 uM) on Nav1.8/SCN10A sodium channels. Show peak current inhibition and delays fast inactivation on Nav1.7/SCN9A (EC(50)&gt;10 uM). This Poecilotheria metallica (Metallic blue ornamental tree spider) protein is Mu/delta-theraphotoxin-Pm2a.